The chain runs to 215 residues: Beta-crystallin A3 (215 aa).

Residues 1 to 30 (MGEAAVPPELDTFPAAKMAQTNPLPVPMGP) are N-terminal arm. Beta/gamma crystallin 'Greek key' domains are found at residues 31–70 (WKIT…KVEC) and 71–117 (GAWV…RPVC). Residues 118 to 123 (SANHKE) form a connecting peptide region. 2 Beta/gamma crystallin 'Greek key' domains span residues 124–165 (SKIT…KIPC) and 166–214 (GAWV…RRIQ).

Belongs to the beta/gamma-crystallin family. Homo/heterodimer, or complexes of higher-order. The structure of beta-crystallin oligomers seems to be stabilized through interactions between the N-terminal arms.

In terms of biological role, crystallins are the dominant structural components of the vertebrate eye lens. The chain is Beta-crystallin A3 (CRYBA1) from Gallus gallus (Chicken).